A 101-amino-acid chain; its full sequence is Integration host factor subunit beta (101 aa).

The segment at 57 to 77 (PARAGRNPRTGAHVPVDQKSV) is disordered.

It belongs to the bacterial histone-like protein family. As to quaternary structure, heterodimer of an alpha and a beta chain.

Functionally, this protein is one of the two subunits of integration host factor, a specific DNA-binding protein that functions in genetic recombination as well as in transcriptional and translational control. The protein is Integration host factor subunit beta of Rhodopseudomonas palustris (strain HaA2).